A 463-amino-acid polypeptide reads, in one-letter code: Asparagine--tRNA ligase (463 aa).

It belongs to the class-II aminoacyl-tRNA synthetase family. Homodimer.

It localises to the cytoplasm. It carries out the reaction tRNA(Asn) + L-asparagine + ATP = L-asparaginyl-tRNA(Asn) + AMP + diphosphate + H(+). The sequence is that of Asparagine--tRNA ligase from Alkaliphilus oremlandii (strain OhILAs) (Clostridium oremlandii (strain OhILAs)).